A 692-amino-acid polypeptide reads, in one-letter code: Elongation factor G (692 aa).

The region spanning 8-282 (ENTRNIGIMA…AVIDYLPSPL (275 aa)) is the tr-type G domain. Residues 17–24 (AHIDAGKT), 81–85 (DTPGH), and 135–138 (NKMD) contribute to the GTP site.

The protein belongs to the TRAFAC class translation factor GTPase superfamily. Classic translation factor GTPase family. EF-G/EF-2 subfamily.

The protein resides in the cytoplasm. Its function is as follows. Catalyzes the GTP-dependent ribosomal translocation step during translation elongation. During this step, the ribosome changes from the pre-translocational (PRE) to the post-translocational (POST) state as the newly formed A-site-bound peptidyl-tRNA and P-site-bound deacylated tRNA move to the P and E sites, respectively. Catalyzes the coordinated movement of the two tRNA molecules, the mRNA and conformational changes in the ribosome. In Bacillus mycoides (strain KBAB4) (Bacillus weihenstephanensis), this protein is Elongation factor G.